The chain runs to 354 residues: UDP-N-acetylglucosamine--N-acetylmuramyl-(pentapeptide) pyrophosphoryl-undecaprenol N-acetylglucosamine transferase 1 (354 aa).

Residues 12 to 14 (TAG), Arg163, Ser193, and Gln287 each bind UDP-N-acetyl-alpha-D-glucosamine.

It belongs to the glycosyltransferase 28 family. MurG subfamily.

The protein resides in the cell membrane. The enzyme catalyses di-trans,octa-cis-undecaprenyl diphospho-N-acetyl-alpha-D-muramoyl-L-alanyl-D-glutamyl-meso-2,6-diaminopimeloyl-D-alanyl-D-alanine + UDP-N-acetyl-alpha-D-glucosamine = di-trans,octa-cis-undecaprenyl diphospho-[N-acetyl-alpha-D-glucosaminyl-(1-&gt;4)]-N-acetyl-alpha-D-muramoyl-L-alanyl-D-glutamyl-meso-2,6-diaminopimeloyl-D-alanyl-D-alanine + UDP + H(+). Its pathway is cell wall biogenesis; peptidoglycan biosynthesis. Cell wall formation. Catalyzes the transfer of a GlcNAc subunit on undecaprenyl-pyrophosphoryl-MurNAc-pentapeptide (lipid intermediate I) to form undecaprenyl-pyrophosphoryl-MurNAc-(pentapeptide)GlcNAc (lipid intermediate II). The sequence is that of UDP-N-acetylglucosamine--N-acetylmuramyl-(pentapeptide) pyrophosphoryl-undecaprenol N-acetylglucosamine transferase 1 from Bacillus thuringiensis (strain Al Hakam).